The chain runs to 162 residues: Nucleotide-binding protein Mpe_A3039 (162 aa).

The protein belongs to the YajQ family.

Functionally, nucleotide-binding protein. This is Nucleotide-binding protein Mpe_A3039 from Methylibium petroleiphilum (strain ATCC BAA-1232 / LMG 22953 / PM1).